A 375-amino-acid chain; its full sequence is uncharacterized protein (375 aa).

It belongs to the IMPDH/GMPR family.

This is an uncharacterized protein from Mycobacterium leprae (strain TN).